The following is a 160-amino-acid chain: Endoribonuclease YbeY (160 aa).

Residues histidine 123, histidine 127, and histidine 133 each contribute to the Zn(2+) site.

The protein belongs to the endoribonuclease YbeY family. Zn(2+) is required as a cofactor.

Its subcellular location is the cytoplasm. Functionally, single strand-specific metallo-endoribonuclease involved in late-stage 70S ribosome quality control and in maturation of the 3' terminus of the 16S rRNA. This chain is Endoribonuclease YbeY, found in Roseiflexus sp. (strain RS-1).